Here is a 452-residue protein sequence, read N- to C-terminus: Glutamyl-tRNA(Gln) amidotransferase subunit A (452 aa).

Catalysis depends on charge relay system residues K56 and S131. Catalysis depends on S155, which acts as the Acyl-ester intermediate.

Belongs to the amidase family. GatA subfamily. Heterotrimer of A, B and C subunits.

The catalysed reaction is L-glutamyl-tRNA(Gln) + L-glutamine + ATP + H2O = L-glutaminyl-tRNA(Gln) + L-glutamate + ADP + phosphate + H(+). Its function is as follows. Allows the formation of correctly charged Gln-tRNA(Gln) through the transamidation of misacylated Glu-tRNA(Gln) in organisms which lack glutaminyl-tRNA synthetase. The reaction takes place in the presence of glutamine and ATP through an activated gamma-phospho-Glu-tRNA(Gln). The protein is Glutamyl-tRNA(Gln) amidotransferase subunit A of Campylobacter curvus (strain 525.92).